The chain runs to 590 residues: 4-oxocyclohex-2-ene-1-carboxylate 5-dehydrogenase (590 aa).

It belongs to the FAD-dependent oxidoreductase 2 family. As to quaternary structure, forms multimers. Requires FAD as cofactor.

It catalyses the reaction 4-oxocyclohex-2-ene-1-carboxylate + NAD(+) = 4-oxocyclohexa-2,5-diene-1-carboxylate + NADH + H(+). Its function is as follows. Desaturase involved in a cyclohexanecarboxylate (CHCA) degradation pathway. Probably catalyzes the conversion of 4-oxocyclohexenecarboxylate to 4-oxocyclohex-2,5-dienecarboxylate, which is spontaneously isomerized to 4-hydroxybenzoate (4-HBA). This is 4-oxocyclohex-2-ene-1-carboxylate 5-dehydrogenase from Sinomonas cyclohexanicum (Corynebacterium cyclohexanicum).